Consider the following 128-residue polypeptide: Fluoride-specific ion channel FluC (128 aa).

Transmembrane regions (helical) follow at residues 5–25 (IVAI…LSIG), 35–55 (LGTL…VVAF), 67–87 (LFVI…SVEV), and 96–116 (FGWA…LTGL). Residues Gly-75 and Thr-78 each contribute to the Na(+) site.

The protein belongs to the fluoride channel Fluc/FEX (TC 1.A.43) family.

The protein localises to the cell inner membrane. It carries out the reaction fluoride(in) = fluoride(out). Its activity is regulated as follows. Na(+) is not transported, but it plays an essential structural role and its presence is essential for fluoride channel function. Its function is as follows. Fluoride-specific ion channel. Important for reducing fluoride concentration in the cell, thus reducing its toxicity. This is Fluoride-specific ion channel FluC from Burkholderia mallei (strain NCTC 10247).